A 308-amino-acid polypeptide reads, in one-letter code: Protein translocase subunit SecF (308 aa).

Helical transmembrane passes span leucine 10–glycine 30, leucine 129–valine 149, isoleucine 160–leucine 180, phenylalanine 181–valine 201, threonine 241–leucine 261, and phenylalanine 264–alanine 284.

Belongs to the SecD/SecF family. SecF subfamily. In terms of assembly, forms a complex with SecD. Part of the essential Sec protein translocation apparatus which comprises SecA, SecYEG and auxiliary proteins SecDF. Other proteins may also be involved.

It is found in the cell membrane. Functionally, part of the Sec protein translocase complex. Interacts with the SecYEG preprotein conducting channel. SecDF uses the proton motive force (PMF) to complete protein translocation after the ATP-dependent function of SecA. The protein is Protein translocase subunit SecF of Anaerolinea thermophila (strain DSM 14523 / JCM 11388 / NBRC 100420 / UNI-1).